A 35-amino-acid chain; its full sequence is Photosystem II reaction center protein T (35 aa).

A helical membrane pass occupies residues alanine 3–phenylalanine 23.

Belongs to the PsbT family. As to quaternary structure, PSII is composed of 1 copy each of membrane proteins PsbA, PsbB, PsbC, PsbD, PsbE, PsbF, PsbH, PsbI, PsbJ, PsbK, PsbL, PsbM, PsbT, PsbY, PsbZ, Psb30/Ycf12, at least 3 peripheral proteins of the oxygen-evolving complex and a large number of cofactors. It forms dimeric complexes.

The protein localises to the plastid. The protein resides in the chloroplast thylakoid membrane. Found at the monomer-monomer interface of the photosystem II (PS II) dimer, plays a role in assembly and dimerization of PSII. PSII is a light-driven water plastoquinone oxidoreductase, using light energy to abstract electrons from H(2)O, generating a proton gradient subsequently used for ATP formation. The polypeptide is Photosystem II reaction center protein T (Cabomba caroliniana (Carolina fanwort)).